We begin with the raw amino-acid sequence, 287 residues long: Phosphoribosylaminoimidazole-succinocarboxamide synthase (287 aa).

It belongs to the SAICAR synthetase family.

It catalyses the reaction 5-amino-1-(5-phospho-D-ribosyl)imidazole-4-carboxylate + L-aspartate + ATP = (2S)-2-[5-amino-1-(5-phospho-beta-D-ribosyl)imidazole-4-carboxamido]succinate + ADP + phosphate + 2 H(+). It participates in purine metabolism; IMP biosynthesis via de novo pathway; 5-amino-1-(5-phospho-D-ribosyl)imidazole-4-carboxamide from 5-amino-1-(5-phospho-D-ribosyl)imidazole-4-carboxylate: step 1/2. The sequence is that of Phosphoribosylaminoimidazole-succinocarboxamide synthase from Neisseria meningitidis serogroup C (strain 053442).